Consider the following 179-residue polypeptide: DELTA-actitoxin-Afr1c (179 aa).

Residues 1-29 (SAEVAGAIIDGASLTFDVLQTVLKALGDV) are N-terminal alpha-helix that contributes to the pore. Residues 11–30 (GASLTFDVLQTVLKALGDVS) are N-terminal region. Arginine 31 provides a ligand contact to an N-(acyl)-sphingosylphosphocholine. 2 residues coordinate N-acetyl-D-glucosamine 6-sulfate: tyrosine 51 and arginine 53. The an N-(acyl)-sphingosylphosphocholine site is built by arginine 53, serine 54, arginine 79, glycine 85, tyrosine 113, serine 114, tryptophan 116, tyrosine 133, tyrosine 137, tyrosine 138, arginine 144, and glycine 168. Residues 105 to 120 (SIPFDYNLYSNWWNVK) form a trp-rich region, which is important for the binding to lipid membrane region. Position 138 (tyrosine 138) interacts with N-acetyl-D-glucosamine 6-sulfate. The Cell attachment site, crucial for protein stability signature appears at 144–146 (RGD).

It belongs to the actinoporin family. Sea anemone subfamily. Octamer or nonamer in membranes. Monomer in the soluble state.

The protein localises to the secreted. It is found in the nematocyst. It localises to the target cell membrane. Its function is as follows. Pore-forming toxin (PFT) that consists of a crown-shaped octamer or nonamer that forms cation-selective hydrophilic pores of about 1.5 nm (inside) and 13 nm (outside) and causes cytolysis. It causes cardiac stimulation. Also causes hemolysis (HC(50)=0.3 nM). Interestingly, the Phe-16 is crucial for hemolysis. Pore formation is a multi-step process that involves specific recognition of membrane sphingomyelin (but neither cholesterol nor phosphatidylcholine) using aromatic rich region and adjacent phosphocholine (POC) binding site, firm binding to the membrane (mainly driven by hydrophobic interactions) accompanied by the transfer of the N-terminal region to the lipid-water interface and finally pore formation after oligomerization of monomers. It is probable that a dimeric form is an assembly intermediate before the complete oligomerization. The formation of stable pores occurs only in vesicles composed of DOPC/SM (there is no oligomerization when the PFT is treated with vesicles of DOPC or SM alone). The transmembrane pore displays 8 lateral perforations, one at each subunit-subunit interface, partially occupied by the acyl-chain region of a bridging lipid. Each pore contains 24 lipid molecules, firmly bound to each subunit, that is, 3 lipids (L1, L2, L3, L4 and/or L5) are associated to each subunit. Lipid L1 bridges 2 subunits, whereas lipids L2 and L3 bind to sites at single subunit. This Actinia fragacea (Strawberry anemone) protein is DELTA-actitoxin-Afr1c.